Reading from the N-terminus, the 318-residue chain is Glycine--tRNA ligase alpha subunit (318 aa).

Residues 298-318 (EAGGSSPSTSRQGEAPRGESQ) form a disordered region. The span at 300–309 (GGSSPSTSRQ) shows a compositional bias: polar residues.

Belongs to the class-II aminoacyl-tRNA synthetase family. As to quaternary structure, tetramer of two alpha and two beta subunits.

It is found in the cytoplasm. It catalyses the reaction tRNA(Gly) + glycine + ATP = glycyl-tRNA(Gly) + AMP + diphosphate. In Rhodopseudomonas palustris (strain BisB18), this protein is Glycine--tRNA ligase alpha subunit.